The primary structure comprises 1413 residues: GTPase-activating protein and VPS9 domain-containing protein 1 (1413 aa).

The Ras-GAP domain occupies 147–385; that stretch reads SYLLQVLRYL…AAFLDVVIGG (239 aa). Serine 227 bears the Phosphoserine mark. Residues threonine 390 and threonine 458 each carry the phosphothreonine modification. Disordered stretches follow at residues 448 to 474, 540 to 587, 718 to 799, and 826 to 852; these read KPGKSSSLEMTPYSTPQLSPAATPANK, LSDG…GSNG, ESCS…PPSQ, and HYARPSHPPPDPPILEGAVGGNEARLP. Residues 451–467 are compositionally biased toward polar residues; that stretch reads KSSSLEMTPYSTPQLSP. A Phosphotyrosine modification is found at tyrosine 460. The residue at position 466 (serine 466) is a Phosphoserine. Threonine 470 is subject to Phosphothreonine. Phosphoserine occurs at positions 721, 725, and 736. Over residues 737–756 the composition is skewed to polar residues; it reads SRPSTPGLSVVSGISATSED. Residue threonine 741 is modified to Phosphothreonine. Phosphoserine is present on serine 745. The span at 757-768 shows a compositional bias: basic and acidic residues; the sequence is IPNKIEDLRSEC. Residues serine 856, serine 882, serine 883, serine 888, serine 894, serine 946, serine 972, and serine 999 each carry the phosphoserine modification. Residues 871-882 show a composition bias toward basic and acidic residues; that stretch reads HSYPERLVRSRS. A disordered region spans residues 871–957; the sequence is HSYPERLVRS…DEKSDRNRPW (87 aa). The segment covering 883–897 has biased composition (low complexity); the sequence is SDVVSSVRRPMSDPS. Residues 934–955 show a composition bias toward basic and acidic residues; sequence DSSRGETEERKDSDDEKSDRNR. The interval 1011–1049 is disordered; sequence VMGDGESAHDSPRDETLQNISADDLPDSASQAAHPQDSA. Over residues 1016–1026 the composition is skewed to basic and acidic residues; it reads ESAHDSPRDET. 2 positions are modified to phosphoserine: serine 1031 and serine 1038. The region spanning 1273 to 1413 is the VPS9 domain; sequence ILRDQVLHEH…EFIKTIDDRK (141 aa).

The protein belongs to the GAPVD1 family. Interacts with TRIP10/CIP4. Interacts with RAB5A.

The protein localises to the membrane. It is found in the endosome. Functionally, acts both as a GTPase-activating protein (GAP) and a guanine nucleotide exchange factor (GEF), and participates in various processes such as endocytosis, insulin receptor internalization or LC2A4/GLUT4 trafficking. Acts as a GEF for the Ras-related protein RAB31 by exchanging bound GDP for free GTP, leading to regulate LC2A4/GLUT4 trafficking. In the absence of insulin, it maintains RAB31 in an active state and promotes a futile cycle between LC2A4/GLUT4 storage vesicles and early endosomes, retaining LC2A4/GLUT4 inside the cells. Upon insulin stimulation, it is translocated to the plasma membrane, releasing LC2A4/GLUT4 from intracellular storage vesicles. Also involved in EGFR trafficking and degradation, possibly by promoting EGFR ubiquitination and subsequent degradation by the proteasome. Has GEF activity for Rab5 and GAP activity for Ras. The protein is GTPase-activating protein and VPS9 domain-containing protein 1 (GAPVD1) of Bos taurus (Bovine).